Reading from the N-terminus, the 379-residue chain is tRNA-specific 2-thiouridylase MnmA (379 aa).

ATP-binding positions include 23–30 (AMSGGVDS) and leucine 49. The Nucleophile role is filled by cysteine 117. The cysteines at positions 117 and 214 are disulfide-linked. Glycine 141 contributes to the ATP binding site. An interaction with tRNA region spans residues 163–165 (RDQ). The active-site Cysteine persulfide intermediate is the cysteine 214.

Belongs to the MnmA/TRMU family.

It localises to the cytoplasm. The enzyme catalyses S-sulfanyl-L-cysteinyl-[protein] + uridine(34) in tRNA + AH2 + ATP = 2-thiouridine(34) in tRNA + L-cysteinyl-[protein] + A + AMP + diphosphate + H(+). Functionally, catalyzes the 2-thiolation of uridine at the wobble position (U34) of tRNA, leading to the formation of s(2)U34. The polypeptide is tRNA-specific 2-thiouridylase MnmA (Cereibacter sphaeroides (strain ATCC 17029 / ATH 2.4.9) (Rhodobacter sphaeroides)).